The primary structure comprises 645 residues: MSEILSSLRSLMASHSPPLDALVVPSEDYHQSEYVSARDKRREFVSGFSGSAGLALITKKEARLWTDGRYFLQALQQLSDEWTLMRMGEDPLVEVWMSDNLPEEANIGVDSWCVSVDTANRWGKSFAKKNQKLITTTTDLVDEVWKSRPPSEMSPVVVHPLEFAGRSVSHKFEDLRAKLKQEGARGLVIAALDEVAWLYNIRGTDVAYCPVVHAFAILTTDSAFLYVDKKKVSDEANSYFNGLGVEVREYTDVISDVALLASDRLISSFASKTVQHEAAKDMEIDSDQPDRLWVDPASCCYALYSKLDAEKVLLQPSPISLSKALKNPVELEGIKNAHVRDGAAVVQYLVWLDNQMQELYGASGYFLEAEASKKKPSETSKLTEVTVSDKLESLRASKEHFRGLSFPTISSVGSNAAVIHYSPEPEACAEMDPDKIYLCDSGAQYLDGTTDITRTVHFGKPSAHEKECYTAVFKGHVALGNARFPKGTNGYTLDILARAPLWKYGLDYRHGTGHGVGSYLCVHEGPHQVSFRPSARNVPLQATMTVTDEPGYYEDGNFGIRLENVLVVNDAETEFNFGDKGYLQFEHITWAPYQVKLIDLDELTREEIDWLNTYHSKCKDILAPFMNQTEMEWLKKATEPVSVSA.

At Ser2 the chain carries N-acetylserine. Residues Arg69 and His420 each coordinate a peptide. Mn(2+)-binding residues include Asp440, Asp451, and His514. His514, His523, and Glu549 together coordinate a peptide. Mn(2+) is bound by residues Glu549 and Glu563.

The protein belongs to the peptidase M24B family. As to quaternary structure, homodimer. Interacts with N-1-naphthylphthalamic acid (NPA). The cofactor is Mn(2+). It depends on Zn(2+) as a cofactor. In terms of processing, glycosylated. Also present in a non-glycosylated form. In terms of tissue distribution, ubiquitous with preferential expression in 5 days-old seedlings, roots, flowers, inflorescences and rosette leaves (at protein levels).

It is found in the cytoplasm. The protein localises to the cell membrane. It localises to the microsome membrane. The enzyme catalyses Release of any N-terminal amino acid, including proline, that is linked to proline, even from a dipeptide or tripeptide.. Inhibited by EGTA and apstatin, and, to some extent, by the flavonoid kaempferol. Its function is as follows. Catalyzes the removal of a penultimate prolyl residue from the N-termini of peptides, such as Arg-Pro-Pro. Aminopeptidase that binds to the auxin transport inhibitor N-1-naphthylphthalamic acid (NPA). May play a negative role in the regulation of PIN auxin transport proteins. This chain is Aminopeptidase P1, found in Arabidopsis thaliana (Mouse-ear cress).